The primary structure comprises 172 residues: Ribosome maturation factor RimM (172 aa).

Residues 96–168 (DGEFYYHEII…RVDVEILEGL (73 aa)) enclose the PRC barrel domain.

Belongs to the RimM family. In terms of assembly, binds ribosomal protein uS19.

The protein resides in the cytoplasm. In terms of biological role, an accessory protein needed during the final step in the assembly of 30S ribosomal subunit, possibly for assembly of the head region. Essential for efficient processing of 16S rRNA. May be needed both before and after RbfA during the maturation of 16S rRNA. It has affinity for free ribosomal 30S subunits but not for 70S ribosomes. The polypeptide is Ribosome maturation factor RimM (Streptococcus pneumoniae serotype 4 (strain ATCC BAA-334 / TIGR4)).